We begin with the raw amino-acid sequence, 940 residues long: AP-2 complex subunit alpha (940 aa).

A phosphoserine mark is found at serine 632 and serine 634. Over residues 651–662 (SHSKLNNSNANT) the composition is skewed to polar residues. Residues 651 to 679 (SHSKLNNSNANTDLLGLSTPPSNNIGSGS) form a disordered region. The segment covering 668–679 (STPPSNNIGSGS) has biased composition (low complexity).

The protein belongs to the adaptor complexes large subunit family. Adaptor protein complex 2 (AP-2) is a heterotetramer composed of two large adaptins (alpha-type and beta-type subunits), a medium adaptin (mu-type subunit AP50) and a small adaptin (sigma-type subunit AP17). In terms of tissue distribution, expressed in the Garland cells, imaginal disks, adult midgut precursors, the antenno-maxillary complex, the endoderm, the fat bodies, and the visceral mesoderm and cells of the CNS and PNS including neuroblasts, the presumptive stomatogastric nervous system, and the lateral chordotonal sense organs.

Its subcellular location is the cell membrane. It is found in the membrane. It localises to the coated pit. Functionally, adaptins are components of the adapter complexes which link clathrin to receptors in coated vesicles. Clathrin-associated protein complexes are believed to interact with the cytoplasmic tails of membrane proteins, leading to their selection and concentration. AP-2alpha is a subunit of the plasma membrane adapter. This Drosophila melanogaster (Fruit fly) protein is AP-2 complex subunit alpha (AP-2alpha).